The following is a 533-amino-acid chain: GMP synthase [glutamine-hydrolyzing] (533 aa).

One can recognise a Glutamine amidotransferase type-1 domain in the interval 25–215 (SIVIFDFGSQ…VFNICKCHAN (191 aa)). Residue Cys-102 is the Nucleophile of the active site. Active-site residues include His-189 and Glu-191. Residues 216–408 (WTMGNYIQES…LGLPDEMIWR (193 aa)) enclose the GMPS ATP-PPase domain. 243–249 (SGGVDSA) lines the ATP pocket.

In terms of assembly, homodimer.

The enzyme catalyses XMP + L-glutamine + ATP + H2O = GMP + L-glutamate + AMP + diphosphate + 2 H(+). Its pathway is purine metabolism; GMP biosynthesis; GMP from XMP (L-Gln route): step 1/1. Its function is as follows. Catalyzes the synthesis of GMP from XMP. This chain is GMP synthase [glutamine-hydrolyzing], found in Dehalococcoides mccartyi (strain CBDB1).